The primary structure comprises 404 residues: uncharacterized protein (404 aa).

Helical transmembrane passes span 15–35, 43–63, 84–104, 121–141, 154–174, 187–207, 231–251, 279–299, 316–336, 338–358, and 373–393; these read WSLL…PGFL, NTLA…DIFA, MVLP…GLAF, GITP…IFVI, IAGF…APPV, ISIF…ITFA, VVGI…VLGV, IFGL…AYTS, GIII…GQPA, ILVL…GTLL, and PLWL…MGIY.

The protein belongs to the NRAMP family.

The protein resides in the cell membrane. This is an uncharacterized protein from Bacillus subtilis (strain 168).